The sequence spans 436 residues: Xylose isomerase (436 aa).

Active-site residues include H100 and D103. Positions 231, 267, 270, 295, 306, 308, and 338 each coordinate Mg(2+).

This sequence belongs to the xylose isomerase family. As to quaternary structure, homotetramer. The cofactor is Mg(2+).

The protein localises to the cytoplasm. The catalysed reaction is alpha-D-xylose = alpha-D-xylulofuranose. The polypeptide is Xylose isomerase (Chelativorans sp. (strain BNC1)).